We begin with the raw amino-acid sequence, 78 residues long: Large ribosomal subunit protein bL28 (78 aa).

The protein belongs to the bacterial ribosomal protein bL28 family.

The polypeptide is Large ribosomal subunit protein bL28 (Flavobacterium psychrophilum (strain ATCC 49511 / DSM 21280 / CIP 103535 / JIP02/86)).